We begin with the raw amino-acid sequence, 169 residues long: Small ribosomal subunit protein uS13m (169 aa).

A disordered region spans residues 149 to 169; it reads KKLQEKKNKEQKKSQKCKTKK. A compositionally biased stretch (basic and acidic residues) spans 150–161; that stretch reads KLQEKKNKEQKK.

The protein belongs to the universal ribosomal protein uS13 family. In terms of assembly, part of the small ribosomal subunit.

Its subcellular location is the mitochondrion. Functionally, located at the top of the head of the small subunit, it contacts several helices of the small subunit rRNA. The polypeptide is Small ribosomal subunit protein uS13m (mrps13) (Dictyostelium discoideum (Social amoeba)).